We begin with the raw amino-acid sequence, 178 residues long: Large ribosomal subunit protein eL20y (178 aa).

Belongs to the eukaryotic ribosomal protein eL20 family.

The chain is Large ribosomal subunit protein eL20y (RPL18AB) from Arabidopsis thaliana (Mouse-ear cress).